Consider the following 556-residue polypeptide: Delta-1-pyrroline-5-carboxylate dehydrogenase, mitochondrial (556 aa).

The N-terminal 17 residues, 1–17, are a transit peptide targeting the mitochondrion; it reads MLRARSAVSQSWKGFKT. NAD(+) is bound by residues lysine 226 and 279–283; that span reads GSVPT. Glutamate 307 serves as the catalytic Proton acceptor. The Nucleophile role is filled by cysteine 341. Glutamate 440 serves as a coordination point for NAD(+). Substrate is bound at residue serine 506.

This sequence belongs to the aldehyde dehydrogenase family.

It localises to the mitochondrion matrix. It catalyses the reaction L-glutamate 5-semialdehyde + NAD(+) + H2O = L-glutamate + NADH + 2 H(+). It functions in the pathway amino-acid degradation; L-proline degradation into L-glutamate; L-glutamate from L-proline: step 2/2. Functionally, irreversible conversion of delta-1-pyrroline-5-carboxylate (P5C), derived either from proline or ornithine, to glutamate. This is a necessary step in the pathway interconnecting the urea and tricarboxylic acid cycles. This is Delta-1-pyrroline-5-carboxylate dehydrogenase, mitochondrial (aldh4a1) from Danio rerio (Zebrafish).